Consider the following 101-residue polypeptide: Protein RnfH (101 aa).

Belongs to the UPF0125 (RnfH) family.

This chain is Protein RnfH, found in Coxiella burnetii (strain RSA 331 / Henzerling II).